A 343-amino-acid polypeptide reads, in one-letter code: Pseudaminic acid synthase (343 aa).

Residues 287–343 (SLYASKDIKKGEMFSEENVKSVRPSFGLHPKFYQELLGKKASKDIKFGDALKQGDFQ) enclose the AFP-like domain.

This sequence belongs to the pseudaminic acid synthase family. It depends on a divalent metal cation as a cofactor.

It carries out the reaction 2,4-diacetamido-2,4,6-trideoxy-beta-L-altrose + phosphoenolpyruvate + H2O = pseudaminate + phosphate. Functionally, catalyzes the fifth step in the biosynthesis of pseudaminic acid, a sialic-acid-like sugar that is used to modify flagellin. Catalyzes the condensation of phosphoenolpyruvate with 2,4-diacetamido-2,4,6-trideoxy-beta-l-altropyranose, forming pseudaminic acid. The chain is Pseudaminic acid synthase (pseI) from Campylobacter jejuni subsp. jejuni serotype O:2 (strain ATCC 700819 / NCTC 11168).